A 105-amino-acid chain; its full sequence is Flagellar transcriptional regulator FlhD (105 aa).

This sequence belongs to the FlhD family. In terms of assembly, homodimer; disulfide-linked. Forms a heterohexamer composed of two FlhC and four FlhD subunits. Each FlhC binds a FlhD dimer, forming a heterotrimer, and a hexamer assembles by dimerization of two heterotrimers.

It localises to the cytoplasm. Functions in complex with FlhC as a master transcriptional regulator that regulates transcription of several flagellar and non-flagellar operons by binding to their promoter region. Activates expression of class 2 flagellar genes, including fliA, which is a flagellum-specific sigma factor that turns on the class 3 genes. Also regulates genes whose products function in a variety of physiological pathways. The chain is Flagellar transcriptional regulator FlhD from Nitrosomonas europaea (strain ATCC 19718 / CIP 103999 / KCTC 2705 / NBRC 14298).